The chain runs to 347 residues: DNA-directed RNA polymerase subunit alpha (347 aa).

Residues 1–230 form an alpha N-terminal domain (alpha-NTD) region; sequence MFKGFQKPKR…DHMTIFINFE (230 aa). Residues 247–347 are alpha C-terminal domain (alpha-CTD); that stretch reads MNEVLNRSVE…EDDGQDQIGE (101 aa). A disordered region spans residues 320-347; that stretch reads GRLVAPPPSAGGGPDFGPEDDGQDQIGE. The span at 336–347 shows a compositional bias: acidic residues; that stretch reads GPEDDGQDQIGE.

This sequence belongs to the RNA polymerase alpha chain family. In terms of assembly, homodimer. The RNAP catalytic core consists of 2 alpha, 1 beta, 1 beta' and 1 omega subunit. When a sigma factor is associated with the core the holoenzyme is formed, which can initiate transcription.

The catalysed reaction is RNA(n) + a ribonucleoside 5'-triphosphate = RNA(n+1) + diphosphate. Its function is as follows. DNA-dependent RNA polymerase catalyzes the transcription of DNA into RNA using the four ribonucleoside triphosphates as substrates. The sequence is that of DNA-directed RNA polymerase subunit alpha from Solibacter usitatus (strain Ellin6076).